The primary structure comprises 148 residues: MQFNIQEIIKMIPHSYPFLLIDKVIACTPNESTIAVKNVTFNEPFFIGHFPGNPIMPGVLIVEAMAQACMICVISNDQGQNTQDYSVYFMSIELAKFRKPVIPGDTLIIEVNVTHKRNNTCKFQCHAQVENTLVAEAQILAMIKQNEA.

Histidine 49 is a catalytic residue.

It belongs to the thioester dehydratase family. FabZ subfamily.

It is found in the cytoplasm. The enzyme catalyses a (3R)-hydroxyacyl-[ACP] = a (2E)-enoyl-[ACP] + H2O. Functionally, involved in unsaturated fatty acids biosynthesis. Catalyzes the dehydration of short chain beta-hydroxyacyl-ACPs and long chain saturated and unsaturated beta-hydroxyacyl-ACPs. This is 3-hydroxyacyl-[acyl-carrier-protein] dehydratase FabZ from Ehrlichia canis (strain Jake).